Here is a 334-residue protein sequence, read N- to C-terminus: MTQYIFPCIDGHTCGNPVRLVAGGAPRLEGATMLEKRAHFLREFDWIRTGLMFEPRGHDMMSGAILYPPTRGDCDVAVLYIETSGCLPMCGHGTIGTITMGIENGLIVPRTPGRLSIETPAGKVDIEYRQEGRHVEEVRLTNVPGFLYAEGLTAEVEGLGEIVVDVAYGGNFYAIVEPQKNFRDMADHTAGELIGWSLTLRAALNQKYEFTHPEHPQINGLSHIQWTGAPTVPGAHARNAVFYGDKAIDRSPCGTGTSARMAQLAARGRLGVGDEFWHESIIGSIFKGRIEAAATVAGRDAIIPSIAGWARQTGLNTIFIDAERDPFAHGFVVK.

Residue Cys-90 is the Proton acceptor of the active site. Substrate-binding positions include Gly-91–His-92, His-223, and Asp-249. Cys-253 serves as the catalytic Proton donor. Gly-254–Thr-255 lines the substrate pocket.

The protein belongs to the proline racemase family. Homodimer.

The enzyme catalyses trans-4-hydroxy-L-proline = cis-4-hydroxy-D-proline. Its function is as follows. Catalyzes the epimerization of trans-4-hydroxy-L-proline (t4LHyp) to cis-4-hydroxy-D-proline (c4DHyp). Is likely involved in a degradation pathway that converts t4LHyp to alpha-ketoglutarate, which would allow P.denitrificans to grow on t4LHyp as a sole carbon source. Also seems to be involved in an alternative catabolic pathway that degrades trans-4-hydroxy-L-proline betaine (tHyp-B) to alpha-ketoglutarate; this pathway would permit the utilization of tHyp-B as a sole carbon and nitrogen source. In Paracoccus denitrificans (strain Pd 1222), this protein is 4-hydroxyproline 2-epimerase (hypF).